The primary structure comprises 568 residues: Kinetochore protein NDC80 homolog (568 aa).

The disordered stretch occupies residues 1-59; it reads MRGGAAGKRRTTVGFGGAPPPPPPSIEQQRHLFNSRDSDASFASSRPSSIGLGGRGASD. Residues 28–39 are compositionally biased toward basic and acidic residues; it reads QQRHLFNSRDSD. The span at 40-49 shows a compositional bias: low complexity; it reads ASFASSRPSS. 2 coiled-coil regions span residues 241–334 and 433–469; these read KESL…AEVA and IESK…TKCD.

It belongs to the NDC80/HEC1 family. As to quaternary structure, component of the NDC80 complex, which consists of NDC80, NUF2, SPC24 and SPC25.

Its subcellular location is the chromosome. The protein localises to the centromere. Its function is as follows. Acts as a component of the essential kinetochore-associated NDC80 complex, which is required for chromosome segregation and spindle checkpoint activity to ensure proper cell division. This is Kinetochore protein NDC80 homolog from Arabidopsis thaliana (Mouse-ear cress).